The primary structure comprises 314 residues: Porphobilinogen deaminase (314 aa).

Cys241 carries the S-(dipyrrolylmethanemethyl)cysteine modification.

Belongs to the HMBS family. Monomer. The cofactor is dipyrromethane.

It catalyses the reaction 4 porphobilinogen + H2O = hydroxymethylbilane + 4 NH4(+). Its pathway is porphyrin-containing compound metabolism; protoporphyrin-IX biosynthesis; coproporphyrinogen-III from 5-aminolevulinate: step 2/4. It participates in porphyrin-containing compound metabolism; chlorophyll biosynthesis. Functionally, tetrapolymerization of the monopyrrole PBG into the hydroxymethylbilane pre-uroporphyrinogen in several discrete steps. The polypeptide is Porphobilinogen deaminase (Chloroherpeton thalassium (strain ATCC 35110 / GB-78)).